The following is a 333-amino-acid chain: Alpha-N-acetylgalactosaminide alpha-2,6-sialyltransferase 6 (333 aa).

A compositionally biased stretch (polar residues) spans 1-12 (MACSRPPSQCDP). Residues 1–27 (MACSRPPSQCDPTTLPPGPPAGRWPLP) form a disordered region. Residues 1–43 (MACSRPPSQCDPTTLPPGPPAGRWPLPFSRRRREMSSNKEQRS) lie on the Cytoplasmic side of the membrane. Residues 44-64 (AVFVILFALITILILYSSNSA) form a helical; Signal-anchor for type II membrane protein membrane-spanning segment. Residues 65-333 (NEVFHYGSLR…GITFSHPSWT (269 aa)) are Lumenal-facing. A glycan (N-linked (GlcNAc...) asparagine) is linked at Asn98. Cys108 and Cys256 form a disulfide bridge.

This sequence belongs to the glycosyltransferase 29 family. Widely expressed, the gene expression is most abundant in colon, brain, liver, and heart.

It localises to the golgi apparatus membrane. The catalysed reaction is a ganglioside GM1b (d18:1(4E)) + CMP-N-acetyl-beta-neuraminate = a ganglioside GD1alpha (d18:1(4E)) + CMP + H(+). The enzyme catalyses a ganglioside GD1a (d18:1(4E)) + CMP-N-acetyl-beta-neuraminate = a ganglioside GT1aalpha (d18:1(4E)) + CMP + H(+). It carries out the reaction a ganglioside GT1b (d18:1(4E)) + CMP-N-acetyl-beta-neuraminate = a ganglioside GQ1balpha (d18:1(4E)) + CMP + H(+). It catalyses the reaction N-acetyl-alpha-neuraminosyl-(2-&gt;3)-beta-D-galactosyl-(1-&gt;3)-N-acetyl-beta-D-glucosaminyl-(1-&gt;3)-beta-D-galactosyl-(1-&gt;4)-beta-D-glucosyl-(1&lt;-&gt;1')-N-acyl-sphing-4-enine + CMP-N-acetyl-beta-neuraminate = N-acetyl-alpha-neuraminosyl-(2-&gt;3)-beta-D-galactosyl-(1-&gt;3)-[N-acetyl-alpha-neuraminosyl-(2-&gt;6)]-N-acetyl-beta-D-glucosaminyl-(1-&gt;3)-beta-D-galactosyl-(1-&gt;4)-beta-D-glucosyl-(1&lt;-&gt;1')-N-acyl-sphing-4-enine + CMP + H(+). The catalysed reaction is a globoside MSGG + CMP-N-acetyl-beta-neuraminate = a globoside DSGG + CMP + H(+). The enzyme catalyses 3-O-[alpha-Neu5Ac-(2-&gt;3)-beta-D-Gal-(1-&gt;3)-alpha-D-GalNAc]-L-Ser-[protein] + CMP-N-acetyl-beta-neuraminate = a 3-O-{alpha-Neu5Ac-(2-&gt;3)-beta-D-Gal-(1-&gt;3)-[alpha-Neu5Ac-(2-&gt;6)]-alpha-D-GalNAc}-L-seryl-[protein] + CMP + H(+). It carries out the reaction 3-O-[alpha-Neu5Ac-(2-&gt;3)-beta-D-Gal-(1-&gt;3)-alpha-D-GalNAc]-L-Thr-[protein] + CMP-N-acetyl-beta-neuraminate = a 3-O-{alpha-Neu5Ac-(2-&gt;3)-beta-D-Gal-(1-&gt;3)-[alpha-Neu5Ac-(2-&gt;6)]-alpha-D-GalNAc}-L-threonyl-[protein] + CMP + H(+). Transfers the sialyl group (N-acetyl-alpha-neuraminyl or NeuAc) from CMP-NeuAc onto glycolipids, forming an alpha-2,6-linkage. Produces branched type disialyl structures by transfer of a sialyl group onto the GalNAc or GlcNAc residue inside backbone core chains having a terminal sialic acid with an alpha-2,3-linkage on Gal. ST6GalNAcVI prefers glycolipids to glycoproteins, predominantly catalyzing the biosynthesis of ganglioside GD1alpha from GM1b. Also has activity toward GD1a and GT1b, and can generate DSGG (disialylgalactosylgloboside) from MSGG (monosialylgalactosylgloboside). Besides GMb1, MSGG and other glycolipids, it shows activity towards sialyl Lc4Cer generating disialyl Lc4Cer, which can lead to the synthesis of disialyl Lewis a (Le(a)), suggested to be a cancer-associated antigen. This chain is Alpha-N-acetylgalactosaminide alpha-2,6-sialyltransferase 6 (St6galnac6), found in Mus musculus (Mouse).